The primary structure comprises 215 residues: 16S rRNA (adenine(1408)-N(1))-methyltransferase (215 aa).

Residues glycine 32, aspartate 55, 87-88 (AE), 102-107 (LMPWGS), and 191-193 (TSW) each bind S-adenosyl-L-methionine.

The protein belongs to the methyltransferase superfamily. Kanamycin-apramycin resistance family.

It carries out the reaction adenosine(1408) in 16S rRNA + S-adenosyl-L-methionine = N(1)-methyladenosine(1408) in 16S rRNA + S-adenosyl-L-homocysteine + H(+). Specifically methylates the N(1) position of adenine 1408 in 16S rRNA. Confers resistance to various aminoglycosides, including kanamycin, neomycin and apramycin. The chain is 16S rRNA (adenine(1408)-N(1))-methyltransferase (kamB) from Streptoalloteichus tenebrarius (strain ATCC 17920 / DSM 40477 / JCM 4838 / CBS 697.72 / NBRC 16177 / NCIMB 11028 / NRRL B-12390 / A12253. 1 / ISP 5477) (Streptomyces tenebrarius).